We begin with the raw amino-acid sequence, 188 residues long: dCTP deaminase (188 aa).

DCTP contacts are provided by residues 111-116 (KSTYAR), 135-137 (TLE), Q156, Y170, K179, and Q180. Residue E137 is the Proton donor/acceptor of the active site.

This sequence belongs to the dCTP deaminase family. As to quaternary structure, homotrimer.

The catalysed reaction is dCTP + H2O + H(+) = dUTP + NH4(+). It participates in pyrimidine metabolism; dUMP biosynthesis; dUMP from dCTP (dUTP route): step 1/2. Its function is as follows. Catalyzes the deamination of dCTP to dUTP. This Rickettsia canadensis (strain McKiel) protein is dCTP deaminase.